The primary structure comprises 565 residues: MKATQTLIATTKELPKEAVLISHQYMLKAGLIKKLASGIYTWMPLGLKVLQKIQNIVRDEMNKAGASELLLPSILPSELLQETHRWDKFGPELLKLHDRHNRDFCYGPTHEEPIVDMARDTIKSYKQLPLNLYQIQTKFRDEIRPRFGVMRAREFIMKDAYSFHENSQCLRNTYNTMYATYCNILDKIGLAYRPVKADTGAIGGDNSHEFQVLANAGEDIICYSNGSDYAANIELATYAKPDLSKRVNSQNTIEKIHTPNIKTIEKLCKEMSFDIKKTIKTMVIKDAGGNFFALVIRGDHELNETKINKLDQIIAPYTLATKEEIFSIFNANPGSLGIYNCPISIIADYSAIAITDLVCGANEDDYHFTNVNWDRDVTNYQIADIRNVVTGDISPDGKGTLELTNGIEVGHIFELEDVYSKPMNANIIGQDGKSKPMLMGCYGFGVSRVMAAAIEQSHDENGIIWPESIAPYQVAILPINYNKSDKVKEVADKLCQDLLGDGIDVLLDDRGARPGVMFADADLIGYSHHVVIGDRLLEQGLIEYKNRKTQEKQEITIAELIKLLK.

This sequence belongs to the class-II aminoacyl-tRNA synthetase family. ProS type 1 subfamily. In terms of assembly, homodimer.

The protein resides in the cytoplasm. It catalyses the reaction tRNA(Pro) + L-proline + ATP = L-prolyl-tRNA(Pro) + AMP + diphosphate. Functionally, catalyzes the attachment of proline to tRNA(Pro) in a two-step reaction: proline is first activated by ATP to form Pro-AMP and then transferred to the acceptor end of tRNA(Pro). As ProRS can inadvertently accommodate and process non-cognate amino acids such as alanine and cysteine, to avoid such errors it has two additional distinct editing activities against alanine. One activity is designated as 'pretransfer' editing and involves the tRNA(Pro)-independent hydrolysis of activated Ala-AMP. The other activity is designated 'posttransfer' editing and involves deacylation of mischarged Ala-tRNA(Pro). The misacylated Cys-tRNA(Pro) is not edited by ProRS. This chain is Proline--tRNA ligase, found in Francisella tularensis subsp. holarctica (strain FTNF002-00 / FTA).